A 289-amino-acid chain; its full sequence is ATP synthase subunit a (289 aa).

6 helical membrane passes run 43–63, 104–124, 160–180, 193–213, 232–252, and 259–279; these read AFHL…VLIF, IAPL…VDLI, LSVF…GGFI, IFVQ…TLIA, VFIL…GLGV, and AVFH…LTIV.

The protein belongs to the ATPase A chain family. In terms of assembly, F-type ATPases have 2 components, CF(1) - the catalytic core - and CF(0) - the membrane proton channel. CF(1) has five subunits: alpha(3), beta(3), gamma(1), delta(1), epsilon(1). CF(0) has three main subunits: a(1), b(2) and c(9-12). The alpha and beta chains form an alternating ring which encloses part of the gamma chain. CF(1) is attached to CF(0) by a central stalk formed by the gamma and epsilon chains, while a peripheral stalk is formed by the delta and b chains.

It is found in the cell inner membrane. Key component of the proton channel; it plays a direct role in the translocation of protons across the membrane. This chain is ATP synthase subunit a, found in Pseudomonas fluorescens (strain SBW25).